A 224-amino-acid polypeptide reads, in one-letter code: Inhibitor of apoptosis protein (224 aa).

A BIR repeat occupies 29-92 (VDARNKSFAI…GFWSRNCGFM (64 aa)). Residues Cys-62, Cys-65, His-82, and Cys-89 each coordinate Zn(2+). A C4-type zinc finger spans residues 189-207 (CMTCGIEQINKDENFCSAC).

Belongs to the asfivirus IAP family. As to quaternary structure, interacts with subunit p17 of host CASP3.

Its subcellular location is the host cytoplasm. The protein resides in the virion. Prevents apoptosis of host cell by inhibiting caspase-3/CASP3 activation to promote the viral replication. Also induces the activation of host NF-kappaB. This chain is Inhibitor of apoptosis protein, found in Ornithodoros (relapsing fever ticks).